The chain runs to 159 residues: 3-hydroxyacyl-[acyl-carrier-protein] dehydratase FabZ (159 aa).

Histidine 58 is an active-site residue.

Belongs to the thioester dehydratase family. FabZ subfamily.

The protein localises to the cytoplasm. It catalyses the reaction a (3R)-hydroxyacyl-[ACP] = a (2E)-enoyl-[ACP] + H2O. Its function is as follows. Involved in unsaturated fatty acids biosynthesis. Catalyzes the dehydration of short chain beta-hydroxyacyl-ACPs and long chain saturated and unsaturated beta-hydroxyacyl-ACPs. This chain is 3-hydroxyacyl-[acyl-carrier-protein] dehydratase FabZ, found in Helicobacter pylori (strain HPAG1).